The sequence spans 95 residues: Aspartyl/glutamyl-tRNA(Asn/Gln) amidotransferase subunit C (95 aa).

Belongs to the GatC family. In terms of assembly, heterotrimer of A, B and C subunits.

The enzyme catalyses L-glutamyl-tRNA(Gln) + L-glutamine + ATP + H2O = L-glutaminyl-tRNA(Gln) + L-glutamate + ADP + phosphate + H(+). It catalyses the reaction L-aspartyl-tRNA(Asn) + L-glutamine + ATP + H2O = L-asparaginyl-tRNA(Asn) + L-glutamate + ADP + phosphate + 2 H(+). Allows the formation of correctly charged Asn-tRNA(Asn) or Gln-tRNA(Gln) through the transamidation of misacylated Asp-tRNA(Asn) or Glu-tRNA(Gln) in organisms which lack either or both of asparaginyl-tRNA or glutaminyl-tRNA synthetases. The reaction takes place in the presence of glutamine and ATP through an activated phospho-Asp-tRNA(Asn) or phospho-Glu-tRNA(Gln). This chain is Aspartyl/glutamyl-tRNA(Asn/Gln) amidotransferase subunit C, found in Desulforapulum autotrophicum (strain ATCC 43914 / DSM 3382 / VKM B-1955 / HRM2) (Desulfobacterium autotrophicum).